The chain runs to 282 residues: NADPH-dependent 7-cyano-7-deazaguanine reductase (282 aa).

88–90 (IES) is a substrate binding site. Position 90 to 91 (90 to 91 (SK)) interacts with NADPH. The active-site Thioimide intermediate is the Cys190. Asp197 serves as the catalytic Proton donor. Residue 229–230 (HE) coordinates substrate. Position 258–259 (258–259 (RG)) interacts with NADPH.

Belongs to the GTP cyclohydrolase I family. QueF type 2 subfamily. Homodimer.

Its subcellular location is the cytoplasm. The enzyme catalyses 7-aminomethyl-7-carbaguanine + 2 NADP(+) = 7-cyano-7-deazaguanine + 2 NADPH + 3 H(+). Its pathway is tRNA modification; tRNA-queuosine biosynthesis. Functionally, catalyzes the NADPH-dependent reduction of 7-cyano-7-deazaguanine (preQ0) to 7-aminomethyl-7-deazaguanine (preQ1). This chain is NADPH-dependent 7-cyano-7-deazaguanine reductase, found in Escherichia coli O45:K1 (strain S88 / ExPEC).